A 589-amino-acid chain; its full sequence is Nicotinate phosphoribosyltransferase (589 aa).

The segment at 1–30 (MSQSNTPLKRKKTENGYSENGSTTGATSNQ) is disordered. Residues 15-30 (NGYSENGSTTGATSNQ) are compositionally biased toward polar residues. Tyr68 and Thr256 together coordinate nicotinate. At His259 the chain carries Phosphohistidine. Nicotinate is bound at residue Arg356. Residue Thr418 participates in 5-phospho-alpha-D-ribose 1-diphosphate binding.

This sequence belongs to the NAPRTase family. Requires Mg(2+) as cofactor. Mn(2+) is required as a cofactor. Post-translationally, transiently phosphorylated on a His residue during the reaction cycle. Phosphorylation strongly increases the affinity for substrates and increases the rate of nicotinate D-ribonucleotide production. Dephosphorylation regenerates the low-affinity form of the enzyme, leading to product release.

It catalyses the reaction nicotinate + 5-phospho-alpha-D-ribose 1-diphosphate + ATP + H2O = nicotinate beta-D-ribonucleotide + ADP + phosphate + diphosphate. The protein operates within cofactor biosynthesis; NAD(+) biosynthesis; nicotinate D-ribonucleotide from nicotinate: step 1/1. Functionally, catalyzes the first step in the biosynthesis of NAD from nicotinic acid, the ATP-dependent synthesis of beta-nicotinate D-ribonucleotide from nicotinate and 5-phospho-D-ribose 1-phosphate. Helps prevent cellular oxidative stress via its role in NAD biosynthesis. The chain is Nicotinate phosphoribosyltransferase (naprt) from Dictyostelium discoideum (Social amoeba).